The chain runs to 1182 residues: Lysine-specific demethylase hairless (1182 aa).

Disordered regions lie at residues Leu-227 to Arg-257, Tyr-302 to Trp-380, Ala-411 to Trp-443, and Thr-507 to Asn-546. Residues Pro-307 to Pro-321 are compositionally biased toward pro residues. An LXXLL motif 1 motif is present at residues Leu-561 to Leu-565. Residues Cys-595 to Cys-620 form a C6-type zinc finger. The segment at Gly-697–Ser-746 is disordered. A compositionally biased stretch (basic and acidic residues) spans Asn-722–Thr-731. The LXXLL motif 2 motif lies at Leu-753–Leu-757. The JmjC domain maps to Asp-939 to Ala-1150. The Fe cation site is built by Cys-1000, Glu-1002, and His-1118.

Fe(2+) is required as a cofactor. Expressed predominantly in brain, hair follicles and interfollicular epidermis. No expression in dermis.

It is found in the nucleus. The enzyme catalyses N(6),N(6)-dimethyl-L-lysyl(9)-[histone H3] + 2 2-oxoglutarate + 2 O2 = L-lysyl(9)-[histone H3] + 2 formaldehyde + 2 succinate + 2 CO2. Its function is as follows. Histone demethylase that specifically demethylates both mono- and dimethylated 'Lys-9' of histone H3. May act as a transcription regulator controlling hair biology (via targeting of collagens), neural activity, and cell cycle. This Mus musculus (Mouse) protein is Lysine-specific demethylase hairless (Hr).